The primary structure comprises 198 residues: Autophagy-related protein 33 (198 aa).

Helical transmembrane passes span 17 to 37 (VSLG…LPAL), 60 to 80 (PVLA…FLAP), and 86 to 106 (PYLL…ILIP). Positions 111–147 (APRRTASSAPRKSSRAKMEASYEVLGDAHSEPASDED) are disordered. Low complexity predominate over residues 112-121 (PRRTASSAPR). Residues 126–142 (AKMEASYEVLGDAHSEP) are compositionally biased toward basic and acidic residues. A helical transmembrane segment spans residues 171–191 (TAISALGFAMAVVGIWGDGAP).

The protein belongs to the ATG33 family.

The protein resides in the mitochondrion membrane. In terms of biological role, involved in the selective degradation of mitochondria via autophagy during starvation and at post-log phase. Autophagy is required for proper vegetative growth, asexual/sexual reproduction, and full virulence. Autophagy is particularly involved in the biosynthesis of deoxynivalenol (DON), an important virulence determinant. This is Autophagy-related protein 33 from Gibberella zeae (strain ATCC MYA-4620 / CBS 123657 / FGSC 9075 / NRRL 31084 / PH-1) (Wheat head blight fungus).